Reading from the N-terminus, the 568-residue chain is Urease subunit alpha (568 aa).

Residues 130–568 form the Urease domain; the sequence is GGIDTHIHFI…LPMAQRYFLF (439 aa). Ni(2+) is bound by residues H135, H137, and K218. K218 is subject to N6-carboxylysine. Residue H220 coordinates substrate. Ni(2+)-binding residues include H247 and H273. The active-site Proton donor is H321. Ni(2+) is bound at residue D361.

It belongs to the metallo-dependent hydrolases superfamily. Urease alpha subunit family. As to quaternary structure, heterotrimer of UreA (gamma), UreB (beta) and UreC (alpha) subunits. Three heterotrimers associate to form the active enzyme. Requires Ni cation as cofactor. In terms of processing, carboxylation allows a single lysine to coordinate two nickel ions.

The protein localises to the cytoplasm. The catalysed reaction is urea + 2 H2O + H(+) = hydrogencarbonate + 2 NH4(+). It functions in the pathway nitrogen metabolism; urea degradation; CO(2) and NH(3) from urea (urease route): step 1/1. This is Urease subunit alpha from Burkholderia pseudomallei (strain K96243).